Reading from the N-terminus, the 847-residue chain is Matrin-3 (847 aa).

S2 is modified (N-acetylserine). Position 3 is an N6-acetyllysine; alternate (K3). K3 is covalently cross-linked (Glycyl lysine isopeptide (Lys-Gly) (interchain with G-Cter in SUMO2); alternate). Residues S4, S9, S11, S14, S22, S41, S118, and S126 each carry the phosphoserine modification. Glycyl lysine isopeptide (Lys-Gly) (interchain with G-Cter in SUMO2) cross-links involve residues K132 and K146. Disordered regions lie at residues 146–174 (KRRR…YRVP) and 187–214 (DSFD…SGYY). Residue T150 is modified to Phosphothreonine. S157 bears the Phosphoserine mark. Y158 is modified (phosphotyrosine). The span at 160–174 (RDGRSATREPPYRVP) shows a compositional bias: basic and acidic residues. A phosphoserine mark is found at S164, S188, and S195. Over residues 201–214 (DYDHGSRSQESGYY) the composition is skewed to basic and acidic residues. Y202 is modified (phosphotyrosine). S206, S208, and S211 each carry phosphoserine. At Y219 the chain carries Phosphotyrosine. A Phosphoserine modification is found at S234. Residue K245 forms a Glycyl lysine isopeptide (Lys-Gly) (interchain with G-Cter in SUMO2) linkage. Residue S264 is modified to Phosphoserine. K269 participates in a covalent cross-link: Glycyl lysine isopeptide (Lys-Gly) (interchain with G-Cter in SUMO2). A Phosphoserine modification is found at S275. The disordered stretch occupies residues 342–394 (PFMLQQSTNPAPGILGPPPPSFHLGGPAVGPRGNLGAGNGNLQGPRHMQKGRV). The RRM 1 domain occupies 398 to 473 (RVVHIMDFQR…KPVRVHLSQK (76 aa)). Glycyl lysine isopeptide (Lys-Gly) (interchain with G-Cter in SUMO2) cross-links involve residues K478, K487, and K491. An RRM 2 domain is found at 496–571 (RVIHLSNLPH…RCVKVDLSEK (76 aa)). A phosphoserine mark is found at S509 and S511. A Glycyl lysine isopeptide (Lys-Gly) (interchain with G-Cter in SUMO2) cross-link involves residue K515. At K522 the chain carries N6-acetyllysine; alternate. K522 participates in a covalent cross-link: Glycyl lysine isopeptide (Lys-Gly) (interchain with G-Cter in SUMO2); alternate. Residue S533 is modified to Phosphoserine. Glycyl lysine isopeptide (Lys-Gly) (interchain with G-Cter in SUMO2) cross-links involve residues K554 and K555. N6-acetyllysine is present on K571. A disordered region spans residues 588–786 (KKDKSRKRSY…DEYRIGPYQP (199 aa)). 4 positions are modified to phosphoserine: S596, S598, S604, and S606. Positions 600-643 (DGKESPSDKKSKTDGSQKTESSTEGKEQEEKSGEDGEKDTKDDQ) are enriched in basic and acidic residues. Glycyl lysine isopeptide (Lys-Gly) (interchain with G-Cter in SUMO2) cross-links involve residues K617 and K630. The segment covering 653–665 (ESEDELLVDEEEA) has biased composition (acidic residues). Residues S654, S671, S673, and S674 each carry the phosphoserine modification. Over residues 666–676 (AALLESGSSVG) the composition is skewed to low complexity. At T679 the chain carries Phosphothreonine. S689 is subject to Phosphoserine. Positions 689–704 (SDGKKEPSDKAVKKDG) are enriched in basic and acidic residues. Positions 710 to 718 (AKKKLKKVD) match the Nuclear localization signal motif. Glycyl lysine isopeptide (Lys-Gly) (interchain with G-Cter in SUMO2) cross-links involve residues K719 and K736. Phosphothreonine is present on T741. Phosphoserine is present on residues S747, S759, and S766. Over residues 767–780 (DENKDDYTIPDEYR) the composition is skewed to basic and acidic residues. Residue K770 forms a Glycyl lysine isopeptide (Lys-Gly) (interchain with G-Cter in SUMO2) linkage. The Matrin-type zinc-finger motif lies at 801–832 (FYCKLCSLFYTNEEVAKNTHCSSLPHYQKLKK). K836 is modified (N6-acetyllysine; alternate). K836 participates in a covalent cross-link: Glycyl lysine isopeptide (Lys-Gly) (interchain with G-Cter in SUMO2); alternate.

As to quaternary structure, part of a complex consisting of SFPQ, NONO and MATR3. Interacts with AGO1 and AGO2. Part of a complex composed at least of ASH2L, EMSY, HCFC1, HSPA8, CCAR2, MATR3, MKI67, RBBP5, TUBB2A, WDR5 and ZNF335; this complex may have a histone H3-specific methyltransferase activity. Interacts with TARDBP. Part of the HDP-RNP complex composed of at least HEXIM1, PRKDC, XRCC5, XRCC6, paraspeckle proteins (SFPQ, NONO, PSPC1, RBM14, and MATR3) and NEAT1 RNA. Interacts with FUS. Interacts with IGF2BP1; the interaction is enhanced by SEPIN14P20 peptide RBPR. Interacts with IGF2BP2 and IGF2BP3. Interacts with RBPMS.

The protein localises to the nucleus matrix. Its function is as follows. May play a role in transcription or may interact with other nuclear matrix proteins to form the internal fibrogranular network. In association with the SFPQ-NONO heteromer may play a role in nuclear retention of defective RNAs. Plays a role in the regulation of DNA virus-mediated innate immune response by assembling into the HDP-RNP complex, a complex that serves as a platform for IRF3 phosphorylation and subsequent innate immune response activation through the cGAS-STING pathway. Binds to N6-methyladenosine (m6A)-containing mRNAs and contributes to MYC stability by binding to m6A-containing MYC mRNAs. May bind to specific miRNA hairpins. The protein is Matrin-3 (MATR3) of Homo sapiens (Human).